Reading from the N-terminus, the 155-residue chain is Small ribosomal subunit protein uS7 (155 aa).

Belongs to the universal ribosomal protein uS7 family. Part of the 30S ribosomal subunit. Contacts proteins S9 and S11.

One of the primary rRNA binding proteins, it binds directly to 16S rRNA where it nucleates assembly of the head domain of the 30S subunit. Is located at the subunit interface close to the decoding center, probably blocks exit of the E-site tRNA. This Thermotoga petrophila (strain ATCC BAA-488 / DSM 13995 / JCM 10881 / RKU-1) protein is Small ribosomal subunit protein uS7.